A 396-amino-acid polypeptide reads, in one-letter code: Elongation factor Tu 1 (396 aa).

Residues 10–206 (KPHCNVGTIG…AVDDYIPQPE (197 aa)) form the tr-type G domain. The tract at residues 19 to 26 (GHVDHGKT) is G1. Position 19-26 (19-26 (GHVDHGKT)) interacts with GTP. Threonine 26 contacts Mg(2+). A G2 region spans residues 60–64 (GITIS). The interval 81 to 84 (DCPG) is G3. Residues 81–85 (DCPGH) and 136–139 (NKCD) each bind GTP. The interval 136–139 (NKCD) is G4. The tract at residues 174-176 (SAL) is G5.

It belongs to the TRAFAC class translation factor GTPase superfamily. Classic translation factor GTPase family. EF-Tu/EF-1A subfamily. Monomer.

The protein localises to the cytoplasm. The enzyme catalyses GTP + H2O = GDP + phosphate + H(+). GTP hydrolase that promotes the GTP-dependent binding of aminoacyl-tRNA to the A-site of ribosomes during protein biosynthesis. This chain is Elongation factor Tu 1, found in Rhodospirillum rubrum (strain ATCC 11170 / ATH 1.1.1 / DSM 467 / LMG 4362 / NCIMB 8255 / S1).